A 404-amino-acid polypeptide reads, in one-letter code: NADH-quinone oxidoreductase subunit D (404 aa).

This sequence belongs to the complex I 49 kDa subunit family. In terms of assembly, NDH-1 is composed of 14 different subunits. Subunits NuoB, C, D, E, F, and G constitute the peripheral sector of the complex.

The protein localises to the cell inner membrane. It catalyses the reaction a quinone + NADH + 5 H(+)(in) = a quinol + NAD(+) + 4 H(+)(out). Functionally, NDH-1 shuttles electrons from NADH, via FMN and iron-sulfur (Fe-S) centers, to quinones in the respiratory chain. The immediate electron acceptor for the enzyme in this species is believed to be ubiquinone. Couples the redox reaction to proton translocation (for every two electrons transferred, four hydrogen ions are translocated across the cytoplasmic membrane), and thus conserves the redox energy in a proton gradient. The chain is NADH-quinone oxidoreductase subunit D from Dinoroseobacter shibae (strain DSM 16493 / NCIMB 14021 / DFL 12).